We begin with the raw amino-acid sequence, 434 residues long: UDP-glucose 6-dehydrogenase (434 aa).

NAD(+)-binding positions include 2 to 19 (NITF…GVMM), V11, D30, K35, T121, and E152. Residues 148–152 (EFLRE), K204, N208, 249–253 (FLNAG), and G257 each bind substrate. Residue C260 is the Nucleophile of the active site. Residue K263 coordinates NAD(+). Position 321 (K321) interacts with substrate. R328 lines the NAD(+) pocket.

The protein belongs to the UDP-glucose/GDP-mannose dehydrogenase family.

The enzyme catalyses UDP-alpha-D-glucose + 2 NAD(+) + H2O = UDP-alpha-D-glucuronate + 2 NADH + 3 H(+). Its pathway is nucleotide-sugar biosynthesis; UDP-alpha-D-glucuronate biosynthesis; UDP-alpha-D-glucuronate from UDP-alpha-D-glucose: step 1/1. The protein is UDP-glucose 6-dehydrogenase (udg) of Rickettsia bellii (strain RML369-C).